The primary structure comprises 160 residues: Endoribonuclease YbeY (160 aa).

His-127, His-131, and His-137 together coordinate Zn(2+).

Belongs to the endoribonuclease YbeY family. Zn(2+) serves as cofactor.

The protein localises to the cytoplasm. Functionally, single strand-specific metallo-endoribonuclease involved in late-stage 70S ribosome quality control and in maturation of the 3' terminus of the 16S rRNA. The protein is Endoribonuclease YbeY of Synechococcus sp. (strain RCC307).